A 104-amino-acid chain; its full sequence is Nucleoid-associated protein Amuc_1227 (104 aa).

Belongs to the YbaB/EbfC family. As to quaternary structure, homodimer.

It is found in the cytoplasm. Its subcellular location is the nucleoid. Binds to DNA and alters its conformation. May be involved in regulation of gene expression, nucleoid organization and DNA protection. The sequence is that of Nucleoid-associated protein Amuc_1227 from Akkermansia muciniphila (strain ATCC BAA-835 / DSM 22959 / JCM 33894 / BCRC 81048 / CCUG 64013 / CIP 107961 / Muc).